Reading from the N-terminus, the 459-residue chain is Argininosuccinate lyase (459 aa).

Belongs to the lyase 1 family. Argininosuccinate lyase subfamily.

The protein resides in the cytoplasm. The catalysed reaction is 2-(N(omega)-L-arginino)succinate = fumarate + L-arginine. The protein operates within amino-acid biosynthesis; L-arginine biosynthesis; L-arginine from L-ornithine and carbamoyl phosphate: step 3/3. This is Argininosuccinate lyase from Prochlorococcus marinus subsp. pastoris (strain CCMP1986 / NIES-2087 / MED4).